A 577-amino-acid chain; its full sequence is Cell pattern formation-associated protein stuA (577 aa).

The interval 1-41 (MNQPQPYMDQHAPAPPPASNMTQYSNYGAPQPLQPATHGYG) is disordered. Residues 19-28 (SNMTQYSNYG) show a composition bias toward polar residues. An HTH APSES-type domain is found at 111–217 (RVTATLWEDE…HNIGALLYHP (107 aa)). Residues 145–166 (GTKLLNVAGMTRGRRDGILKSE) constitute a DNA-binding region (H-T-H motif). Disordered stretches follow at residues 228 to 487 (ATMA…QLPS) and 518 to 577 (QYPA…AVRR). Composition is skewed to polar residues over residues 238–251 (SQEYMRTPQGTQAP) and 319–333 (AVNSASTPPSNSQGM). A compositionally biased stretch (low complexity) spans 334–350 (PQYQTSQPPYTQSYSTP). Polar residues predominate over residues 351–364 (GSYSQPQYTHQQPG). The segment covering 390–399 (AENDHPDHKV) has biased composition (basic and acidic residues). Low complexity predominate over residues 465-479 (TPRTTNPYTGYNNTP). Positions 526-552 (KRGREDDDQVDPYGRPSSALGEHKRQR) are nuclear localization domain.

The protein belongs to the EFG1/PHD1/stuA family.

Its subcellular location is the nucleus. Transcription factor that regulates asexual reproduction. Binds the StuA-response elements (StRE) with the consensus sequence 5'-(A/T)CGCG(T/A)N(A/C)-3' at the promoters of target genes. The chain is Cell pattern formation-associated protein stuA from Dothistroma septosporum (strain NZE10 / CBS 128990) (Red band needle blight fungus).